A 132-amino-acid chain; its full sequence is Rubredoxin-1 (132 aa).

Residues 1–53 (MSRYQCPDCQYIYDENKGEPHEGFHPNTSWNDIPKDWACPDCAVRDKVDFIFL) form the Rubredoxin-like domain. Fe cation is bound by residues Cys6, Cys9, Cys39, and Cys42. The disordered stretch occupies residues 108–132 (TEVLDQASTPQVVRKSSTRKKMRNK). A compositionally biased stretch (polar residues) spans 113–122 (QASTPQVVRK). The span at 123 to 132 (SSTRKKMRNK) shows a compositional bias: basic residues.

Belongs to the rubredoxin family. The cofactor is Fe(3+).

The protein resides in the cytoplasm. It functions in the pathway hydrocarbon metabolism; alkane degradation. Not known. Probably involved in an electron transport pathway, but not required for the hydrocarbon hydroxylating system. Seems to be non-functional. In Ectopseudomonas oleovorans (Pseudomonas oleovorans), this protein is Rubredoxin-1 (alkF).